Here is a 377-residue protein sequence, read N- to C-terminus: UPF0754 membrane protein LMOf2365_2257 (377 aa).

A run of 2 helical transmembrane segments spans residues 1–21 (MSVLFTILLMAVIGGFIGAMT) and 357–377 (YLGGILGGFIGIIQGVLAMWI).

It belongs to the UPF0754 family.

It localises to the cell membrane. The polypeptide is UPF0754 membrane protein LMOf2365_2257 (Listeria monocytogenes serotype 4b (strain F2365)).